Consider the following 298-residue polypeptide: 4-diphosphocytidyl-2-C-methyl-D-erythritol kinase (298 aa).

The active site involves K19. Position 106–116 (106–116 (PVASGIGGGSA)) interacts with ATP. D148 is an active-site residue.

This sequence belongs to the GHMP kinase family. IspE subfamily.

The enzyme catalyses 4-CDP-2-C-methyl-D-erythritol + ATP = 4-CDP-2-C-methyl-D-erythritol 2-phosphate + ADP + H(+). The protein operates within isoprenoid biosynthesis; isopentenyl diphosphate biosynthesis via DXP pathway; isopentenyl diphosphate from 1-deoxy-D-xylulose 5-phosphate: step 3/6. Its function is as follows. Catalyzes the phosphorylation of the position 2 hydroxy group of 4-diphosphocytidyl-2C-methyl-D-erythritol. This Rhizobium leguminosarum bv. trifolii (strain WSM2304) protein is 4-diphosphocytidyl-2-C-methyl-D-erythritol kinase.